A 218-amino-acid polypeptide reads, in one-letter code: Glutathione S-transferase Mu 7 (218 aa).

In terms of domain architecture, GST N-terminal spans 2 to 88 (PMTLGYWDIR…YLGRKHNLCG (87 aa)). Glutathione-binding positions include 7-8 (YW), 46-50 (WLNEK), 59-60 (NL), and 72-73 (QS). Positions 90–208 (TEEERIRVDI…KSSRFLPRPL (119 aa)) constitute a GST C-terminal domain. Tyrosine 116 contacts substrate.

It belongs to the GST superfamily. Mu family. Homodimer.

It localises to the cytoplasm. The enzyme catalyses RX + glutathione = an S-substituted glutathione + a halide anion + H(+). In terms of biological role, conjugation of reduced glutathione to a wide number of exogenous and endogenous hydrophobic electrophiles. In Rattus norvegicus (Rat), this protein is Glutathione S-transferase Mu 7.